Here is a 165-residue protein sequence, read N- to C-terminus: Ubiquitin-fold modifier-conjugating enzyme 1 (165 aa).

Catalysis depends on cysteine 117, which acts as the Glycyl thioester intermediate.

This sequence belongs to the ubiquitin-conjugating enzyme family. UFC1 subfamily.

Functionally, E2-like enzyme which forms an intermediate with UFM1 via a thioester linkage. The sequence is that of Ubiquitin-fold modifier-conjugating enzyme 1 from Brugia malayi (Filarial nematode worm).